We begin with the raw amino-acid sequence, 119 residues long: Large ribosomal subunit protein uL18 (119 aa).

This sequence belongs to the universal ribosomal protein uL18 family. Part of the 50S ribosomal subunit; part of the 5S rRNA/L5/L18/L25 subcomplex. Contacts the 5S and 23S rRNAs.

In terms of biological role, this is one of the proteins that bind and probably mediate the attachment of the 5S RNA into the large ribosomal subunit, where it forms part of the central protuberance. This Nitratidesulfovibrio vulgaris (strain DP4) (Desulfovibrio vulgaris) protein is Large ribosomal subunit protein uL18.